The primary structure comprises 148 residues: Large ribosomal subunit protein bL9 (148 aa).

This sequence belongs to the bacterial ribosomal protein bL9 family.

Functionally, binds to the 23S rRNA. This chain is Large ribosomal subunit protein bL9, found in Desulfatibacillum aliphaticivorans.